We begin with the raw amino-acid sequence, 210 residues long: 3-hexulose-6-phosphate synthase (210 aa).

This sequence belongs to the HPS/KGPDC family. HPS subfamily.

The enzyme catalyses D-ribulose 5-phosphate + formaldehyde = D-arabino-hex-3-ulose 6-phosphate. It functions in the pathway one-carbon metabolism; formaldehyde assimilation via RuMP pathway; D-fructose 6-phosphate from D-ribulose 5-phosphate and formaldehyde: step 1/2. Catalyzes the condensation of ribulose 5-phosphate with formaldehyde to form 3-hexulose 6-phosphate. In Staphylococcus aureus (strain MRSA252), this protein is 3-hexulose-6-phosphate synthase.